The primary structure comprises 348 residues: D-alanine--D-alanine ligase (348 aa).

An ATP-grasp domain is found at 132 to 334; the sequence is KRVLESIGIP…YPDLIEELVT (203 aa). 162 to 217 serves as a coordination point for ATP; it reads LARLTFPIFVKPANMGSSVGISKAQTKVELRKAIQLALTYDSRVLIEQGVIAREIE. Mg(2+) contacts are provided by Asp288, Glu301, and Asn303.

Belongs to the D-alanine--D-alanine ligase family. Mg(2+) serves as cofactor. It depends on Mn(2+) as a cofactor.

The protein localises to the cytoplasm. It catalyses the reaction 2 D-alanine + ATP = D-alanyl-D-alanine + ADP + phosphate + H(+). The protein operates within cell wall biogenesis; peptidoglycan biosynthesis. Cell wall formation. This Streptococcus pyogenes serotype M4 (strain MGAS10750) protein is D-alanine--D-alanine ligase.